The primary structure comprises 461 residues: Phosphomethylpyrimidine synthase (461 aa).

Substrate contacts are provided by residues Asn80, Met109, Tyr138, His173, 193–195 (SRG), 234–237 (DGLR), and Glu273. His277 contributes to the Zn(2+) binding site. Position 300 (Tyr300) interacts with substrate. Residue His341 coordinates Zn(2+). The [4Fe-4S] cluster site is built by Cys421, Cys424, and Cys429.

This sequence belongs to the ThiC family. It depends on [4Fe-4S] cluster as a cofactor.

It carries out the reaction 5-amino-1-(5-phospho-beta-D-ribosyl)imidazole + S-adenosyl-L-methionine = 4-amino-2-methyl-5-(phosphooxymethyl)pyrimidine + CO + 5'-deoxyadenosine + formate + L-methionine + 3 H(+). It participates in cofactor biosynthesis; thiamine diphosphate biosynthesis. Catalyzes the synthesis of the hydroxymethylpyrimidine phosphate (HMP-P) moiety of thiamine from aminoimidazole ribotide (AIR) in a radical S-adenosyl-L-methionine (SAM)-dependent reaction. The polypeptide is Phosphomethylpyrimidine synthase (Solibacter usitatus (strain Ellin6076)).